Here is a 278-residue protein sequence, read N- to C-terminus: Sulfide dehydrogenase subunit beta (278 aa).

Positions 1–4 (MFKI) are excised as a propeptide. The region spanning 1–95 (MFKILRKERL…LGPLGKPSHI (95 aa)) is the FAD-binding FR-type domain. Cys-222, Cys-225, and Cys-237 together coordinate [2Fe-2S] cluster.

In terms of assembly, heterodimer of alpha and beta subunits. The cofactor is FAD. Requires [2Fe-2S] cluster as cofactor.

The protein resides in the cytoplasm. The enzyme catalyses n sulfur + hydrogen sulfide + NADP(+) = (n+1) sulfur + NADPH. The catalysed reaction is 2 reduced [2Fe-2S]-[ferredoxin] + NADP(+) + H(+) = 2 oxidized [2Fe-2S]-[ferredoxin] + NADPH. A bifunctional enzyme that catalyzes the reduction of elemental sulfur or polysulfide to hydrogen sulfide with NADPH as electron donor. Also functions as a reduced ferredoxin:NADP oxidoreductase with a very high affinity for reduced ferredoxin. Exhibits a broad specificity for various physiological and non-physiological substrates with varied reduction potentials such as methyl viologen, benzyl viologen, FAD, FMN, methylene blue, 2,6-dichlorophenolindophenol (DCIP), cytochrome C and ferricyanide with highest preference for benzyl viologen. Does not reduce fumarate, succinate, nitrate, nitrite, sulfate, sulfite or protons. Does not possess any hydrogenase activity or NADPH-dependent glutamate synthase activity. In Pyrococcus furiosus (strain ATCC 43587 / DSM 3638 / JCM 8422 / Vc1), this protein is Sulfide dehydrogenase subunit beta.